The following is a 190-amino-acid chain: Elongation factor P-like protein (190 aa).

Belongs to the elongation factor P family.

The polypeptide is Elongation factor P-like protein (Salmonella gallinarum (strain 287/91 / NCTC 13346)).